Reading from the N-terminus, the 134-residue chain is MIIGLGSDLIDIRRVEKSIERFGERFTHRCFTDIERAKSDGRKNRAASYAKRFAAKEACSKALGTGLANGVFWKDMGVVNLPGGKPTMILTNGAGARLAAMLPAGHRANIHLTITDDFPYAQAFVIIEALPVNG.

Asp-8 and Glu-57 together coordinate Mg(2+).

It belongs to the P-Pant transferase superfamily. AcpS family. Mg(2+) is required as a cofactor.

The protein resides in the cytoplasm. It carries out the reaction apo-[ACP] + CoA = holo-[ACP] + adenosine 3',5'-bisphosphate + H(+). Functionally, transfers the 4'-phosphopantetheine moiety from coenzyme A to a Ser of acyl-carrier-protein. In Agrobacterium fabrum (strain C58 / ATCC 33970) (Agrobacterium tumefaciens (strain C58)), this protein is Holo-[acyl-carrier-protein] synthase.